Reading from the N-terminus, the 1083-residue chain is MSWDDAIEGVDRDTPGGRMPRAWNVAARLRAANDDISHAHVADGVPTYAELHCLSDFSFLRGASSAEQLFARAQHCGYSALAITDECSLAGIVRGLEASRVTGVRLIVGSEFTLIDGTRFVLLVENAHGYPQVCGLVTTARRAASKGAYRLGRADVEAQFRDVAPGVFALWLPGVQPQAEQGAWLQQVFGERAFLAVELHREQDDGARLQVLQALAQQLGMTAVASGDVHMAQRRERIVQDTLTAIRHTLPLAECGAHLFRNGERHLRTRRALGNIYPDALLQAAVALAQRCTFDISKISYTYPRELVPEGHTPTSYLRQLTEAGIRKRWPGGITAKVREDIEKELALIALKKYEAFFLTVQDVVRFAREQNILCQGRGSSANSAVCYALGITAVNPDETRLLMARFLSEKRDEPPDIDVDFEHERREEVLQYVYRKYGRERAALAATVICYRGKSAVRDVAKAFGLPPDQIALLANCYGWGNGETPMEQRIEEAGFDLANPLINKILLVTEHLRDHPRHLSQHVGGFVISDEPLSLLVPVENAAMADRTIIQWDKDDLETMKLLKVDCLALGMLTCIRKTLDLVRGHRGRDYSIATLPGEDLPTYKMIQRADTVGVFQIESRAQMAMLPRLKPAEFYDLVIEVAIVRPGPIQGDMVHPYLRRRQGREDVSYPSPAVEDILKPTLGVPLFQEQVMELLMHAADYTESEADNLRRSMAAWRRGGDMEQHRTRVRERMQGKGYASTFIDQIFEQIKGFGSYGFPQSHAASFAKLVYASCWLKRHEPAAFACGLLNAQPMGFYSASQIVQDARRGSPERERVEVLPVDVVHSDWDNTLVGGRPWRSAADPGEQPAIRLGMRQVAGLSDVVAQRIVAARTQRAFADIGDLCLRAALDEKARLALAEAGALQGMVGNRNAARWAMAGVEARRPLLPGSPEERPVAFEAPHAGEEILADYRSVGLSLRQHPMALLRPQMRQRRILGLRDLQGRPHGSGVHVAGLVTQRQRPATAKGTIFVTLEDEHGMINVIVWSHLALRRRRALLESRLLAVRGRWERVDGVEHLIAGDLHDLSDLLGDMQLPSRDFH.

The protein belongs to the DNA polymerase type-C family. DnaE2 subfamily.

The protein resides in the cytoplasm. It carries out the reaction DNA(n) + a 2'-deoxyribonucleoside 5'-triphosphate = DNA(n+1) + diphosphate. In terms of biological role, DNA polymerase involved in damage-induced mutagenesis and translesion synthesis (TLS). It is not the major replicative DNA polymerase. This is Error-prone DNA polymerase from Xanthomonas oryzae pv. oryzae (strain PXO99A).